Here is a 398-residue protein sequence, read N- to C-terminus: Dual specificity protein phosphatase 4 (398 aa).

V2 carries the N-acetylvaline modification. The Rhodanese domain maps to 45 to 163; that stretch reads SGGKCLLLDC…FSSEYPEFCS (119 aa). A Tyrosine-protein phosphatase domain is found at 199 to 340; sequence GPVEILPFLY…LLQFESQVLT (142 aa). The Phosphocysteine intermediate role is filled by C284. Phosphoserine; by MAPK occurs at positions 390 and 395.

It belongs to the protein-tyrosine phosphatase family. Non-receptor class dual specificity subfamily. In terms of assembly, hollow spherical complex composed of 24 subunits with pseudooctahedral symmetry, has a tetramer as the basic unit. In terms of processing, phosphorylation in the C-terminus by ERK1/2 inhibits proteasomal degradation and stabilizes the protein.

The protein localises to the nucleus. The enzyme catalyses O-phospho-L-tyrosyl-[protein] + H2O = L-tyrosyl-[protein] + phosphate. The catalysed reaction is O-phospho-L-seryl-[protein] + H2O = L-seryl-[protein] + phosphate. It carries out the reaction O-phospho-L-threonyl-[protein] + H2O = L-threonyl-[protein] + phosphate. In terms of biological role, regulates mitogenic signal transduction by dephosphorylating both Thr and Tyr residues on MAP kinases ERK1 and ERK2. In Mus musculus (Mouse), this protein is Dual specificity protein phosphatase 4 (Dusp4).